Here is a 91-residue protein sequence, read N- to C-terminus: Uteroglobin (91 aa).

A signal peptide spans 1–21 (MKLTIAIVLVTLTLFCRPAST).

The protein belongs to the secretoglobin family. In terms of assembly, antiparallel homodimer; disulfide-linked. Interaction with LMBR1L is controversial.

The protein localises to the secreted. Its function is as follows. Binds phosphatidylcholine, phosphatidylinositol, polychlorinated biphenyls (PCB) and weakly progesterone, potent inhibitor of phospholipase A2. This is Uteroglobin (SCGB1A1) from Bos taurus (Bovine).